The chain runs to 470 residues: Putative gustatory receptor 28b (470 aa).

Topologically, residues 1-76 are cytoplasmic; the sequence is MDIEMAKEPV…KTGKKAIKKT (76 aa). The chain crosses the membrane as a helical span at residues 77–97; the sequence is IFGYINGIMHIAMFVFAYSLT. Topologically, residues 98–119 are extracellular; that stretch reads IYNNCESVASYFFRSRITYFGD. A helical membrane pass occupies residues 120–140; the sequence is LMQIVSGFIGVTVIYLTAFVP. At 141–175 the chain is on the cytoplasmic side; the sequence is NHRLERCLQKFHTMDVQLQTVGVKIMYSKVLRFSY. Residues 176-196 traverse the membrane as a helical segment; it reads MVLISMFLVNVLFTGGTFSVL. Residues 197 to 204 lie on the Extracellular side of the membrane; the sequence is YSSEVAPT. Residues 205–225 form a helical membrane-spanning segment; it reads MALHFTFLIQHTVIAIAIALF. Topologically, residues 226 to 309 are cytoplasmic; the sequence is SCFTYLVEMR…ATANKYFTYQ (84 aa). The helical transmembrane segment at 310–330 threads the bilayer; the sequence is LLTIISIAFLIIVFDAYYVLE. The Extracellular portion of the chain corresponds to 331–346; the sequence is TLLGKSKRESKFKTVE. A helical transmembrane segment spans residues 347–367; sequence FVTFFSCQMILYLIAIISIVE. At 368–423 the chain is on the cytoplasmic side; it reads GSNRAIKKSEKTGGIVHSLLNKTKSAEVKEKLQQFSMQLMHLKINFTAAGLFNIDR. Residues 424 to 444 traverse the membrane as a helical segment; it reads TLYFTISGALTTYLIILLQFT. Over 445 to 470 the chain is Extracellular; it reads SNSPNNGYGNGSSCCETFNNMTNHTL. N454, N464, and N467 each carry an N-linked (GlcNAc...) asparagine glycan.

This sequence belongs to the insect chemoreceptor superfamily. Gustatory receptor (GR) family. Gr66a subfamily. In terms of tissue distribution, isoforms A and E have taste neuron-specific expression restricted to the labial palps, the internal taste organs in the pharynx, and the legs. In addition to expression in a large number of taste neurons, isoform A is also expressed in a few nonchemosensory neurons, including the campaniform sensilla of the wing, leg stretch receptors, and multiple dendritic neurons in the abdomen. Isoform B is the only receptor not expressed in gustatory receptor neurons in the labellum. We observe expression of this receptor in a single large cell at the base of each maxillary palp, in campaniform sensilla of the wing, and multiple dendritic neurons in the abdomen. Isoform C is expressed by many gustatory receptor neurons in the labial palps, the pharyngeal taste clusters, and taste neurons in the legs. In addition, isoform C expressed in a single cell at the base of the maxillary palps, neurons in the Johnston's organ (JO), campaniform sensilla of the wing, stretch receptors and the femoral chordotonal organ of the legs, and multiple dendritic neurons in the abdomen. Isoform D is expressed in a small number of gustatory receptor neurons in the labial palps, the ventral cibarial sense organ (VCSO), and legs. Atypical expression is observed in three neurons in the arista, campaniform sensilla of the wing, stretch and femoral chordotonal organ receptors in the legs, and multiple dendritic neurons in the abdomen. In larvae, Isoform A is expressed in neurons of the terminal external chemosensory organ and the dorsal external chemosensory organ; and isoform E is expressed in neurons of the terminal external chemosensory organ.

Its subcellular location is the cell membrane. In terms of biological role, probable gustatory receptor which mediates acceptance or avoidance behavior, depending on its substrates. Atypical expression also suggests nongustatory roles in the nervous system and tissues involved in proprioception, hygroreception, and other sensory modalities. It is also possible that it has chemosensory roles in the detection of internal ligands. The sequence is that of Putative gustatory receptor 28b (Gr28b) from Drosophila melanogaster (Fruit fly).